A 176-amino-acid chain; its full sequence is NAD(P)H-quinone oxidoreductase subunit 6, chloroplastic (176 aa).

A run of 5 helical transmembrane segments spans residues 10–30 (FLLV…VLLT), 32–52 (PIYS…FYIL), 61–81 (AQLL…VMFM), 95–115 (VGSG…ITII), and 152–172 (FFLP…GAIA).

This sequence belongs to the complex I subunit 6 family. In terms of assembly, NDH is composed of at least 16 different subunits, 5 of which are encoded in the nucleus.

It is found in the plastid. The protein resides in the chloroplast thylakoid membrane. It carries out the reaction a plastoquinone + NADH + (n+1) H(+)(in) = a plastoquinol + NAD(+) + n H(+)(out). It catalyses the reaction a plastoquinone + NADPH + (n+1) H(+)(in) = a plastoquinol + NADP(+) + n H(+)(out). Functionally, NDH shuttles electrons from NAD(P)H:plastoquinone, via FMN and iron-sulfur (Fe-S) centers, to quinones in the photosynthetic chain and possibly in a chloroplast respiratory chain. The immediate electron acceptor for the enzyme in this species is believed to be plastoquinone. Couples the redox reaction to proton translocation, and thus conserves the redox energy in a proton gradient. In Manihot esculenta (Cassava), this protein is NAD(P)H-quinone oxidoreductase subunit 6, chloroplastic (ndhG).